The sequence spans 233 residues: Ribose-5-phosphate isomerase A (233 aa).

Residues 31 to 34, 87 to 90, and 100 to 103 contribute to the substrate site; these read SGST, DGAD, and KGGG. The Proton acceptor role is filled by E109. K127 is a binding site for substrate.

This sequence belongs to the ribose 5-phosphate isomerase family. Homodimer.

The catalysed reaction is aldehydo-D-ribose 5-phosphate = D-ribulose 5-phosphate. It participates in carbohydrate degradation; pentose phosphate pathway; D-ribose 5-phosphate from D-ribulose 5-phosphate (non-oxidative stage): step 1/1. In terms of biological role, catalyzes the reversible conversion of ribose-5-phosphate to ribulose 5-phosphate. The chain is Ribose-5-phosphate isomerase A from Chlamydia felis (strain Fe/C-56) (Chlamydophila felis).